The sequence spans 535 residues: Peptide chain release factor 3 (535 aa).

A tr-type G domain is found at 8–277; the sequence is KRRRTFAIIS…TLVDLAPPPG (270 aa). Residues 17–24, 85–89, and 139–142 each bind GTP; these read SHPDAGKT, DTPGH, and NKLD.

Belongs to the TRAFAC class translation factor GTPase superfamily. Classic translation factor GTPase family. PrfC subfamily.

The protein localises to the cytoplasm. In terms of biological role, increases the formation of ribosomal termination complexes and stimulates activities of RF-1 and RF-2. It binds guanine nucleotides and has strong preference for UGA stop codons. It may interact directly with the ribosome. The stimulation of RF-1 and RF-2 is significantly reduced by GTP and GDP, but not by GMP. In Nitrosomonas eutropha (strain DSM 101675 / C91 / Nm57), this protein is Peptide chain release factor 3.